Consider the following 179-residue polypeptide: Large ribosomal subunit protein uL6 (179 aa).

It belongs to the universal ribosomal protein uL6 family. As to quaternary structure, part of the 50S ribosomal subunit.

Its function is as follows. This protein binds to the 23S rRNA, and is important in its secondary structure. It is located near the subunit interface in the base of the L7/L12 stalk, and near the tRNA binding site of the peptidyltransferase center. The chain is Large ribosomal subunit protein uL6 from Rhodococcus erythropolis (strain PR4 / NBRC 100887).